A 592-amino-acid polypeptide reads, in one-letter code: Guanylate-binding protein 1 (592 aa).

The tract at residues 1 to 311 (MASEIHMTGP…NAISSGDLPC (311 aa)) is GTPase domain (Globular). Residues 35–278 (TQPMVVVAIV…FCSYIFSNSK (244 aa)) form the GB1/RHD3-type G domain. GTP-binding positions include 45–52 (GLYRTGKS), 67–69 (LGS), and 97–101 (DTEGL). Ser-156 bears the Phosphoserine mark. Cysteine methyl ester is present on Cys-589. The S-farnesyl cysteine moiety is linked to residue Cys-589. A Phosphothreonine modification is found at Thr-590. The propeptide at 590-592 (TIS) is removed in mature form.

It belongs to the TRAFAC class dynamin-like GTPase superfamily. GB1/RHD3 GTPase family. GB1 subfamily. As to quaternary structure, homodimer; homodimerization occurs upon GTP-binding and is required for the second hydrolysis step from GDP to GMP. Undergoes conformational changes and oligomerization upon GTP-binding and hydrolysis. Heterodimer with other family members, including GBP2, GBP3, GBP4 and GBP5. Dimerization regulates subcellular location to membranous structures. Interacts with SQSTM1. Interacts (when phosphorylated) with 14-3-3 protein sigma (SFN); leading to GBP1 retention in the cytosol and inactivation. In terms of processing, isoprenylation is required for proper subcellular location. Phosphorylated at Ser-156 by PIM1 in absence of infection, inhibits GBP1: phosphorylation promotes interaction with 14-3-3 protein sigma (SFN), leading to GBP1 retention in the cytosol. Dephosphorylated in response to infection, liberating GBP1.

It is found in the cytoplasmic vesicle membrane. The protein localises to the golgi apparatus membrane. The protein resides in the cell membrane. It localises to the cytoplasm. Its subcellular location is the cytosol. It is found in the secreted. The catalysed reaction is GTP + H2O = GDP + phosphate + H(+). It catalyses the reaction GDP + H2O = GMP + phosphate + H(+). In terms of biological role, interferon (IFN)-inducible GTPase that plays important roles in innate immunity against a diverse range of bacterial, viral and protozoan pathogens. Hydrolyzes GTP to GMP in two consecutive cleavage reactions: GTP is first hydrolyzed to GDP and then to GMP in a processive manner. Following infection, recruited to the pathogen-containing vacuoles or vacuole-escaped bacteria and promotes both inflammasome assembly and autophagy. Acts as a positive regulator of inflammasome assembly by facilitating the detection of inflammasome ligands from pathogens. Involved in the lysis of pathogen-containing vacuoles, releasing pathogens into the cytosol. Following pathogen release in the cytosol, forms a protein coat in a GTPase-dependent manner that encapsulates pathogens and promotes the detection of ligands by pattern recognition receptors. Plays a key role in inflammasome assembly in response to infection by Gram-negative bacteria: following pathogen release in the cytosol, forms a protein coat that encapsulates Gram-negative bacteria and directly binds to lipopolysaccharide (LPS), disrupting the O-antigen barrier and unmasking lipid A that is that detected by the non-canonical inflammasome effector CASP4/CASP11. Also promotes recruitment of proteins that mediate bacterial cytolysis, leading to release double-stranded DNA (dsDNA) that activates the AIM2 inflammasome. Involved in autophagy by regulating bacteriolytic peptide generation via its interaction with ubiquitin-binding protein SQSTM1, which delivers monoubiquitinated proteins to autolysosomes for the generation of bacteriolytic peptides. Confers protection to several pathogens, including the bacterial pathogens L.monocytogenes and M.bovis BCG as well as the protozoan pathogen T.gondii. Exhibits antiviral activity against influenza virus. The chain is Guanylate-binding protein 1 (GBP1) from Pongo abelii (Sumatran orangutan).